The chain runs to 429 residues: MNHSRSHALFAQAQTLLPGGVNSPVRAFKSVGGEPFFVARADGPYLFDVDDNRYIDYVGSWGPMIAGHNHPAVREAVERAIGNGLSFGAPCAAEVTMAQTITRLVPSCEMVRMVNSGTEATLSAVRLARGATGRNRIIKFEGCYHGHGDSFLVKAGSGMLTLGVPTSPGVPAGLSELTATLSFNDFEGATALFDEIGAEVAAVIIEPVVGNANCIPPQAGYLQHLRTLCTRHGALLIFDEVMTGFRVALGGAQAHYGVTPDLTTFGKIIGGGMPVGAYGGRRDLMEQVAPAGPIYQAGTLSGNPVAMAAGLAMLELVQEPGFHTRLSEATSMLCEGLEDAARAAGIAVTTNQVGGMFGLFFTDDIVESYAQATACDITSFNRFFHAMLQRGVYLAPSAYEAGFMSSAHDQAVIEATLAAAREAFADVAR.

Lys267 carries the post-translational modification N6-(pyridoxal phosphate)lysine.

It belongs to the class-III pyridoxal-phosphate-dependent aminotransferase family. HemL subfamily. Homodimer. The cofactor is pyridoxal 5'-phosphate.

Its subcellular location is the cytoplasm. It catalyses the reaction (S)-4-amino-5-oxopentanoate = 5-aminolevulinate. It participates in porphyrin-containing compound metabolism; protoporphyrin-IX biosynthesis; 5-aminolevulinate from L-glutamyl-tRNA(Glu): step 2/2. This Xanthomonas euvesicatoria pv. vesicatoria (strain 85-10) (Xanthomonas campestris pv. vesicatoria) protein is Glutamate-1-semialdehyde 2,1-aminomutase.